The primary structure comprises 357 residues: Aurora kinase A- and ninein-interacting protein (357 aa).

The segment covering 71-91 (LQPGKTNGSDQKSVSSHTESQ) has biased composition (polar residues). Residues 71-98 (LQPGKTNGSDQKSVSSHTESQINKESKK) are disordered. Residues 187 to 357 (RKEEKGDSAR…EGNQVIRHQF (171 aa)) are interaction with AURKA. Phosphoserine is present on residues Ser267 and Ser292. Residues 281–357 (KDSWSQLFTE…EGNQVIRHQF (77 aa)) form an interaction with RBBP8/CtIP region.

This sequence belongs to the AUNIP family. Interacts (via C-terminus) with AURKA (via C-terminus). Interacts (via N-terminus) with NIN; this interaction blocks NIN phosphorylation by both AURKA and GSK3B. Identified in a complex with NIN and AURKA. Interacts with RBBP8/CtIP. As to expression, expressed in heart, skeletal muscles, placenta and testis.

It is found in the nucleus. The protein resides in the chromosome. The protein localises to the cytoplasm. Its subcellular location is the cytoskeleton. It localises to the microtubule organizing center. It is found in the centrosome. The protein resides in the spindle pole. In terms of biological role, DNA-binding protein that accumulates at DNA double-strand breaks (DSBs) following DNA damage and promotes DNA resection and homologous recombination. Serves as a sensor of DNA damage: binds DNA with a strong preference for DNA substrates that mimic structures generated at stalled replication forks, and anchors RBBP8/CtIP to DSB sites to promote DNA end resection and ensuing homologous recombination repair. Inhibits non-homologous end joining (NHEJ). Required for the dynamic movement of AURKA at the centrosomes and spindle apparatus during the cell cycle. The protein is Aurora kinase A- and ninein-interacting protein of Homo sapiens (Human).